We begin with the raw amino-acid sequence, 145 residues long: 3-dehydroquinate dehydratase (145 aa).

Y24 acts as the Proton acceptor in catalysis. Residues N76, H82, and D89 each contribute to the substrate site. H102 serves as the catalytic Proton donor. Substrate is bound by residues 103–104 and R113; that span reads VS.

The protein belongs to the type-II 3-dehydroquinase family. Homododecamer.

The catalysed reaction is 3-dehydroquinate = 3-dehydroshikimate + H2O. It functions in the pathway metabolic intermediate biosynthesis; chorismate biosynthesis; chorismate from D-erythrose 4-phosphate and phosphoenolpyruvate: step 3/7. Catalyzes a trans-dehydration via an enolate intermediate. The sequence is that of 3-dehydroquinate dehydratase from Herminiimonas arsenicoxydans.